Here is a 601-residue protein sequence, read N- to C-terminus: Probable serine/threonine-protein kinase WNK3 (601 aa).

Positions 34–291 (GRFNEILGKG…ARELLDDPFL (258 aa)) constitute a Protein kinase domain. Residues 114 to 117 (TELF) and Lys164 each bind ATP. Asp181 serves as the catalytic Proton acceptor. 2 disordered regions span residues 470 to 498 (GWRP…PGGA) and 551 to 601 (ADDD…SEQP). Positions 477 to 493 (TDDDDDDDLVGGGDDPD) are enriched in acidic residues. Residues 560–571 (LQGSSSDTGGSN) are compositionally biased toward polar residues. The segment covering 572–583 (HEQHAMGKDKEV) has biased composition (basic and acidic residues).

This sequence belongs to the protein kinase superfamily. Ser/Thr protein kinase family. WNK subfamily.

The enzyme catalyses L-seryl-[protein] + ATP = O-phospho-L-seryl-[protein] + ADP + H(+). It carries out the reaction L-threonyl-[protein] + ATP = O-phospho-L-threonyl-[protein] + ADP + H(+). This chain is Probable serine/threonine-protein kinase WNK3 (WNK3), found in Oryza sativa subsp. japonica (Rice).